The sequence spans 248 residues: Segregation and condensation protein A (248 aa).

It belongs to the ScpA family. As to quaternary structure, component of a cohesin-like complex composed of ScpA, ScpB and the Smc homodimer, in which ScpA and ScpB bind to the head domain of Smc. The presence of the three proteins is required for the association of the complex with DNA.

Its subcellular location is the cytoplasm. Its function is as follows. Participates in chromosomal partition during cell division. May act via the formation of a condensin-like complex containing Smc and ScpB that pull DNA away from mid-cell into both cell halves. This chain is Segregation and condensation protein A, found in Clostridium perfringens (strain ATCC 13124 / DSM 756 / JCM 1290 / NCIMB 6125 / NCTC 8237 / Type A).